The chain runs to 629 residues: tRNA uridine 5-carboxymethylaminomethyl modification enzyme MnmG (629 aa).

Residue 13–18 (GGGHAG) coordinates FAD. 273 to 287 (GPRYCPSIEDKIHRF) lines the NAD(+) pocket.

The protein belongs to the MnmG family. In terms of assembly, homodimer. Heterotetramer of two MnmE and two MnmG subunits. The cofactor is FAD.

It localises to the cytoplasm. In terms of biological role, NAD-binding protein involved in the addition of a carboxymethylaminomethyl (cmnm) group at the wobble position (U34) of certain tRNAs, forming tRNA-cmnm(5)s(2)U34. The sequence is that of tRNA uridine 5-carboxymethylaminomethyl modification enzyme MnmG from Shewanella baltica (strain OS185).